Consider the following 184-residue polypeptide: ATP synthase subunit b, chloroplastic (184 aa).

A helical transmembrane segment spans residues 27 to 49 (LATNPINLSVVLGVLVFFGKGVL).

Belongs to the ATPase B chain family. F-type ATPases have 2 components, F(1) - the catalytic core - and F(0) - the membrane proton channel. F(1) has five subunits: alpha(3), beta(3), gamma(1), delta(1), epsilon(1). F(0) has four main subunits: a(1), b(1), b'(1) and c(10-14). The alpha and beta chains form an alternating ring which encloses part of the gamma chain. F(1) is attached to F(0) by a central stalk formed by the gamma and epsilon chains, while a peripheral stalk is formed by the delta, b and b' chains.

The protein resides in the plastid. It is found in the chloroplast thylakoid membrane. In terms of biological role, f(1)F(0) ATP synthase produces ATP from ADP in the presence of a proton or sodium gradient. F-type ATPases consist of two structural domains, F(1) containing the extramembraneous catalytic core and F(0) containing the membrane proton channel, linked together by a central stalk and a peripheral stalk. During catalysis, ATP synthesis in the catalytic domain of F(1) is coupled via a rotary mechanism of the central stalk subunits to proton translocation. Functionally, component of the F(0) channel, it forms part of the peripheral stalk, linking F(1) to F(0). This Phaseolus vulgaris (Kidney bean) protein is ATP synthase subunit b, chloroplastic.